The primary structure comprises 278 residues: Indole-3-glycerol phosphate synthase (278 aa).

Belongs to the TrpC family.

The enzyme catalyses 1-(2-carboxyphenylamino)-1-deoxy-D-ribulose 5-phosphate + H(+) = (1S,2R)-1-C-(indol-3-yl)glycerol 3-phosphate + CO2 + H2O. The protein operates within amino-acid biosynthesis; L-tryptophan biosynthesis; L-tryptophan from chorismate: step 4/5. This chain is Indole-3-glycerol phosphate synthase, found in Pseudomonas fluorescens (strain Pf0-1).